The chain runs to 287 residues: NAD kinase (287 aa).

Catalysis depends on D66, which acts as the Proton acceptor. Residues 66 to 67, 137 to 138, R148, R165, D167, and 178 to 183 contribute to the NAD(+) site; these read DG, ND, and TAYSMS.

It belongs to the NAD kinase family. Requires a divalent metal cation as cofactor.

It is found in the cytoplasm. The enzyme catalyses NAD(+) + ATP = ADP + NADP(+) + H(+). Its function is as follows. Involved in the regulation of the intracellular balance of NAD and NADP, and is a key enzyme in the biosynthesis of NADP. Catalyzes specifically the phosphorylation on 2'-hydroxyl of the adenosine moiety of NAD to yield NADP. This Chlorobium limicola (strain DSM 245 / NBRC 103803 / 6330) protein is NAD kinase.